We begin with the raw amino-acid sequence, 379 residues long: Protein COS2 (379 aa).

The Cytoplasmic portion of the chain corresponds to 1 to 72; sequence MKENELKNEK…WKLSNNCIYP (72 aa). A helical membrane pass occupies residues 73–93; sequence LIVSLLVLFLGPIFVLVICGL. Over 94–254 the chain is Extracellular; the sequence is SRKRSLSKQL…FLCCIYVSRG (161 aa). Residues 255-275 traverse the membrane as a helical segment; it reads MCLLLRTLYLGWILFMLVQGF. Over 276–379 the chain is Cytoplasmic; it reads QNIRVLIMSM…QLSRSEVLLV (104 aa).

The protein belongs to the DUP/COS family.

The protein resides in the membrane. The sequence is that of Protein COS2 (COS2) from Saccharomyces cerevisiae (strain ATCC 204508 / S288c) (Baker's yeast).